A 297-amino-acid polypeptide reads, in one-letter code: Ribosomal protein L11 methyltransferase (297 aa).

S-adenosyl-L-methionine is bound by residues Thr152, Gly173, Asp195, and Asn234.

The protein belongs to the methyltransferase superfamily. PrmA family.

It is found in the cytoplasm. It carries out the reaction L-lysyl-[protein] + 3 S-adenosyl-L-methionine = N(6),N(6),N(6)-trimethyl-L-lysyl-[protein] + 3 S-adenosyl-L-homocysteine + 3 H(+). Methylates ribosomal protein L11. In Cupriavidus taiwanensis (strain DSM 17343 / BCRC 17206 / CCUG 44338 / CIP 107171 / LMG 19424 / R1) (Ralstonia taiwanensis (strain LMG 19424)), this protein is Ribosomal protein L11 methyltransferase.